The chain runs to 356 residues: Peritrophin-44 (356 aa).

The first 23 residues, 1–23 (MKELQITTGCLLLMVAAIGKTSA), serve as a signal peptide directing secretion. Chitin-binding type-2 domains are found at residues 28–85 (SETC…KCIS), 88–146 (KNAC…ECTA), 147–201 (DSIC…PCLA), 220–283 (NFVC…PCTF), and 286–355 (CGNL…YKLC). The cysteines at positions 62 and 75 are disulfide-linked. An N-linked (GlcNAc...) asparagine glycan is attached at N114. Intrachain disulfides connect C122–C135, C181–C193, and C262–C273. N-linked (GlcNAc...) asparagine glycosylation occurs at N309.

Glycosylated. In terms of tissue distribution, larval peritrophic membrane.

Functionally, may have roles in the maintenance of peritrophic membrane structure and in the determination of the porosity of the peritrophic membrane. May bind chitin or related oligosaccharide structures. This Lucilia cuprina (Green bottle fly) protein is Peritrophin-44.